The chain runs to 384 residues: Cytochrome b (384 aa).

The next 4 helical transmembrane spans lie at 32 to 52 (FGFL…FLAI), 76 to 98 (WLLR…IHIS), 113 to 133 (TWVV…MGYV), and 179 to 199 (FFSF…VHMA). His-82 and His-96 together coordinate heme b. 2 residues coordinate heme b: His-183 and His-197. An a ubiquinone-binding site is contributed by His-202. A run of 4 helical transmembrane segments spans residues 225-245 (FIIK…LFVY), 289-309 (LGGV…PWIT), 321-341 (LYKK…WIGG), and 348-368 (YVVI…IFIP).

It belongs to the cytochrome b family. In terms of assembly, the main subunits of complex b-c1 are: cytochrome b, cytochrome c1 and the Rieske protein. It depends on heme b as a cofactor.

The protein resides in the mitochondrion inner membrane. In terms of biological role, component of the ubiquinol-cytochrome c reductase complex (complex III or cytochrome b-c1 complex) that is part of the mitochondrial respiratory chain. The b-c1 complex mediates electron transfer from ubiquinol to cytochrome c. Contributes to the generation of a proton gradient across the mitochondrial membrane that is then used for ATP synthesis. In Cyanidium caldarium (Red alga), this protein is Cytochrome b (MT-CYB).